Consider the following 318-residue polypeptide: Biotin synthase (318 aa).

The 227-residue stretch at 46–272 folds into the Radical SAM core domain; the sequence is DGVDVEQLNN…RSVVKISGGR (227 aa). Cys-61, Cys-65, and Cys-68 together coordinate [4Fe-4S] cluster. Cys-105, Cys-138, Cys-197, and Lys-267 together coordinate [2Fe-2S] cluster.

This sequence belongs to the radical SAM superfamily. Biotin synthase family. Homodimer. It depends on [4Fe-4S] cluster as a cofactor. Requires [2Fe-2S] cluster as cofactor.

The enzyme catalyses (4R,5S)-dethiobiotin + (sulfur carrier)-SH + 2 reduced [2Fe-2S]-[ferredoxin] + 2 S-adenosyl-L-methionine = (sulfur carrier)-H + biotin + 2 5'-deoxyadenosine + 2 L-methionine + 2 oxidized [2Fe-2S]-[ferredoxin]. It functions in the pathway cofactor biosynthesis; biotin biosynthesis; biotin from 7,8-diaminononanoate: step 2/2. Functionally, catalyzes the conversion of dethiobiotin (DTB) to biotin by the insertion of a sulfur atom into dethiobiotin via a radical-based mechanism. In Cenarchaeum symbiosum (strain A), this protein is Biotin synthase.